The primary structure comprises 290 residues: 33 kDa chaperonin (290 aa).

2 cysteine pairs are disulfide-bonded: cysteine 235/cysteine 237 and cysteine 268/cysteine 271.

It belongs to the HSP33 family. Post-translationally, under oxidizing conditions two disulfide bonds are formed involving the reactive cysteines. Under reducing conditions zinc is bound to the reactive cysteines and the protein is inactive.

It is found in the cytoplasm. Its function is as follows. Redox regulated molecular chaperone. Protects both thermally unfolding and oxidatively damaged proteins from irreversible aggregation. Plays an important role in the bacterial defense system toward oxidative stress. The sequence is that of 33 kDa chaperonin from Streptococcus pyogenes serotype M5 (strain Manfredo).